Consider the following 94-residue polypeptide: Viral macrophage inflammatory protein 2 (94 aa).

The first 20 residues, 1–20 (MDTKGILLVAVLTALLCLQS), serve as a signal peptide directing secretion. 2 disulfide bridges follow: C34-C58 and C35-C74.

It belongs to the intercrine beta (chemokine CC) family. Monomer. Interacts with human chemokine receptor CXCR4.

It is found in the secreted. In terms of biological role, blocks infection by several different human immunodeficiency virus type 1 (HIV-1) strains. This occurs because vMIP-II binds to a wide range of chemokine receptors. May form part of the response to host defenses contributing to virus-induced neoplasia and may have relevance to KSHV and HIV-I interactions. This is Viral macrophage inflammatory protein 2 (ORF K4) from Human herpesvirus 8 type P (isolate GK18) (HHV-8).